The sequence spans 118 residues: Small ribosomal subunit protein uS13 (118 aa).

A disordered region spans residues serine 94–arginine 118.

It belongs to the universal ribosomal protein uS13 family. In terms of assembly, part of the 30S ribosomal subunit. Forms a loose heterodimer with protein S19. Forms two bridges to the 50S subunit in the 70S ribosome.

Functionally, located at the top of the head of the 30S subunit, it contacts several helices of the 16S rRNA. In the 70S ribosome it contacts the 23S rRNA (bridge B1a) and protein L5 of the 50S subunit (bridge B1b), connecting the 2 subunits; these bridges are implicated in subunit movement. Contacts the tRNAs in the A and P-sites. This Dichelobacter nodosus (strain VCS1703A) protein is Small ribosomal subunit protein uS13.